Consider the following 350-residue polypeptide: S-adenosylmethionine:tRNA ribosyltransferase-isomerase (350 aa).

The protein belongs to the QueA family. As to quaternary structure, monomer.

The protein resides in the cytoplasm. The enzyme catalyses 7-aminomethyl-7-carbaguanosine(34) in tRNA + S-adenosyl-L-methionine = epoxyqueuosine(34) in tRNA + adenine + L-methionine + 2 H(+). The protein operates within tRNA modification; tRNA-queuosine biosynthesis. In terms of biological role, transfers and isomerizes the ribose moiety from AdoMet to the 7-aminomethyl group of 7-deazaguanine (preQ1-tRNA) to give epoxyqueuosine (oQ-tRNA). This is S-adenosylmethionine:tRNA ribosyltransferase-isomerase from Aliivibrio fischeri (strain ATCC 700601 / ES114) (Vibrio fischeri).